The primary structure comprises 1082 residues: Protein SPT23 (1082 aa).

Disordered regions lie at residues 315 to 346 (NASN…PQSD), 376 to 417 (NNNN…FSDI), and 457 to 476 (ASAR…FMST). Over residues 316–328 (ASNTTTPTSTSNA) the composition is skewed to low complexity. Residues 329 to 346 (QVSPMTNDTRSFSSPQSD) are compositionally biased toward polar residues. 2 stretches are compositionally biased toward low complexity: residues 376–391 (NNNN…KTNT) and 399–416 (HFPS…SFSD). S468 is subject to Phosphoserine. An IPT/TIG domain is found at 508–585 (PSIQRVIPAQ…DPSETSMRNN (78 aa)). 2 ANK repeats span residues 709–738 (RGRT…HLND) and 742–771 (FGFT…NIMK).

Functionally, dosage-dependent suppressor of Ty-induced promoter mutations. May exert its suppression effect through protein-protein interactions since does not present any of the motifs generally found in transcriptional activators or DNA binding proteins. The polypeptide is Protein SPT23 (SPT23) (Saccharomyces cerevisiae (strain ATCC 204508 / S288c) (Baker's yeast)).